We begin with the raw amino-acid sequence, 391 residues long: ATP phosphoribosyltransferase regulatory subunit (391 aa).

This sequence belongs to the class-II aminoacyl-tRNA synthetase family. HisZ subfamily. Heteromultimer composed of HisG and HisZ subunits.

The protein resides in the cytoplasm. It functions in the pathway amino-acid biosynthesis; L-histidine biosynthesis; L-histidine from 5-phospho-alpha-D-ribose 1-diphosphate: step 1/9. Functionally, required for the first step of histidine biosynthesis. May allow the feedback regulation of ATP phosphoribosyltransferase activity by histidine. The polypeptide is ATP phosphoribosyltransferase regulatory subunit (Bacillus licheniformis (strain ATCC 14580 / DSM 13 / JCM 2505 / CCUG 7422 / NBRC 12200 / NCIMB 9375 / NCTC 10341 / NRRL NRS-1264 / Gibson 46)).